A 241-amino-acid polypeptide reads, in one-letter code: Ubiquinone biosynthesis O-methyltransferase (241 aa).

4 residues coordinate S-adenosyl-L-methionine: Arg42, Gly62, Asp83, and Met127.

This sequence belongs to the methyltransferase superfamily. UbiG/COQ3 family.

The enzyme catalyses a 3-demethylubiquinol + S-adenosyl-L-methionine = a ubiquinol + S-adenosyl-L-homocysteine + H(+). It carries out the reaction a 3-(all-trans-polyprenyl)benzene-1,2-diol + S-adenosyl-L-methionine = a 2-methoxy-6-(all-trans-polyprenyl)phenol + S-adenosyl-L-homocysteine + H(+). It functions in the pathway cofactor biosynthesis; ubiquinone biosynthesis. O-methyltransferase that catalyzes the 2 O-methylation steps in the ubiquinone biosynthetic pathway. The polypeptide is Ubiquinone biosynthesis O-methyltransferase (Pectobacterium atrosepticum (strain SCRI 1043 / ATCC BAA-672) (Erwinia carotovora subsp. atroseptica)).